The primary structure comprises 444 residues: Acyl-CoA 6-desaturase (444 aa).

The Cytoplasmic portion of the chain corresponds to 1–131 (MGKGGNQGEG…DMNLFKTNHV (131 aa)). The Cytochrome b5 heme-binding domain maps to 18-95 (VPTFSWEEIQ…LKPLLIGELA (78 aa)). A helical membrane pass occupies residues 132-152 (FFLLLLAHIIALESIAWFTVF). Topologically, residues 153-157 (YFGNG) are lumenal. The chain crosses the membrane as a helical span at residues 158–178 (WISTLITAFVLATSQAQAGWL). Over 179–264 (QHDYGHLSVY…KYLPYNHQHE (86 aa)) the chain is Cytoplasmic. Residues 180-184 (HDYGH) carry the Histidine box-1 motif. Residues 217 to 221 (HFQHH) carry the Histidine box-2 motif. The helical transmembrane segment at 265–285 (YFFLIGPPLLIPMYFQYQIIM) threads the bilayer. At 286-305 (TMIVHKNWVDLAWAISYYIR) the chain is on the lumenal side. Residues 306 to 326 (FFITYIPFYGILGALLFLNFI) form a helical membrane-spanning segment. The Cytoplasmic portion of the chain corresponds to 327–444 (RFLESHWFVW…KLWLDAYLHK (118 aa)). Positions 382–386 (QIEHH) match the Histidine box-3 motif.

This sequence belongs to the fatty acid desaturase type 1 family.

Its subcellular location is the endoplasmic reticulum membrane. It catalyses the reaction (9Z,12Z)-octadecadienoyl-CoA + 2 Fe(II)-[cytochrome b5] + O2 + 2 H(+) = (6Z,9Z,12Z)-octadecatrienoyl-CoA + 2 Fe(III)-[cytochrome b5] + 2 H2O. The catalysed reaction is (9Z,12Z,15Z)-octadecatrienoyl-CoA + 2 Fe(II)-[cytochrome b5] + O2 + 2 H(+) = (6Z,9Z,12Z,15Z)-octadecatetraenoyl-CoA + 2 Fe(III)-[cytochrome b5] + 2 H2O. The enzyme catalyses (9Z,12Z,15Z,18Z,21Z)-tetracosapentaenoyl-CoA + 2 Fe(II)-[cytochrome b5] + O2 + 2 H(+) = (6Z,9Z,12Z,15Z,18Z,21Z)-tetracosahexaenoyl-CoA + 2 Fe(III)-[cytochrome b5] + 2 H2O. It carries out the reaction (11E)-octadecenoyl-CoA + 2 Fe(II)-[cytochrome b5] + O2 + 2 H(+) = (6Z,11E)-octadecadienoyl-CoA + 2 Fe(III)-[cytochrome b5] + 2 H2O. It catalyses the reaction (11Z,14Z)-eicosadienoyl-CoA + 2 Fe(II)-[cytochrome b5] + O2 + 2 H(+) = (8Z,11Z,14Z)-eicosatrienoyl-CoA + 2 Fe(III)-[cytochrome b5] + 2 H2O. The catalysed reaction is (11Z,14Z,17Z)-eicosatrienoyl-CoA + 2 Fe(II)-[cytochrome b5] + O2 + 2 H(+) = (8Z,11Z,14Z,17Z)-eicosatetraenoyl-CoA + 2 Fe(III)-[cytochrome b5] + 2 H2O. Its pathway is lipid metabolism; polyunsaturated fatty acid biosynthesis. Functionally, involved in the biosynthesis of highly unsaturated fatty acids (HUFA) from the essential polyunsaturated fatty acids (PUFA) linoleic acid (LA) (18:2n-6) and alpha-linolenic acid (ALA) (18:3n-3) precursors, acting as a fatty acyl-coenzyme A (CoA) desaturase that introduces a cis double bond at carbon 6 of the fatty acyl chain. Catalyzes the first and rate limiting step in this pathway which is the desaturation of LA (18:2n-6) and ALA (18:3n-3) into gamma-linoleate (GLA) (18:3n-6) and stearidonate (18:4n-3), respectively. Subsequently, in the biosynthetic pathway of HUFA n-3 series, it desaturates tetracosapentaenoate (24:5n-3) to tetracosahexaenoate (24:6n-3), which is then converted to docosahexaenoate (DHA)(22:6n-3), an important lipid for nervous system function. It can also desaturate (11E)-octadecenoate (trans-vaccenoate) at carbon 6 generating (6Z,11E)-octadecadienoate. In addition to Delta-6 activity, this enzyme exhibits Delta-8 activity with slight biases toward n-3 fatty acyl-CoA substrates. The protein is Acyl-CoA 6-desaturase (FADS2) of Pongo abelii (Sumatran orangutan).